The sequence spans 382 residues: Serine/arginine-rich splicing factor SR45a (382 aa).

4 stretches are compositionally biased toward low complexity: residues 30 to 45 (PMSY…SLSP), 54 to 68 (VSRS…SVSS), 177 to 195 (PSYS…SRSY), and 202 to 219 (SYSP…YSPF). Disordered stretches follow at residues 30 to 76 (PMSY…PGNS) and 150 to 382 (KARR…SVSP). Over residues 288–316 (RARDRSCSPYYRGRDRSYSPHYQGRDRSY) the composition is skewed to basic and acidic residues. Residues 329–343 (VSGSVSPGGRSMSRS) show a composition bias toward low complexity. The segment covering 345–361 (SPRKGRKESRSKSRRHD) has biased composition (basic residues). Positions 364-382 (SSMCHSRSARSSTSRSVSP) are enriched in low complexity.

The protein belongs to the splicing factor SR family. SR45 subfamily. In terms of assembly, component of the spliceosome. Homodimer. Interacts with PRP38, SCL28, SR45, RNU1 and U2AF35B. Phosphorylated. Expressed in leaves, stems and roots.

It localises to the nucleus speckle. Functionally, probable splicing factor involved in constitutive and/or alternative splicing events. May bridge the 5' and 3' components of the spliceosome. The polypeptide is Serine/arginine-rich splicing factor SR45a (SR45A) (Arabidopsis thaliana (Mouse-ear cress)).